A 251-amino-acid chain; its full sequence is Hydroxyacylglutathione hydrolase (251 aa).

The Zn(2+) site is built by His59, His61, Asp63, His64, His118, Asp141, and His179.

The protein belongs to the metallo-beta-lactamase superfamily. Glyoxalase II family. In terms of assembly, monomer. It depends on Zn(2+) as a cofactor.

It catalyses the reaction an S-(2-hydroxyacyl)glutathione + H2O = a 2-hydroxy carboxylate + glutathione + H(+). It participates in secondary metabolite metabolism; methylglyoxal degradation; (R)-lactate from methylglyoxal: step 2/2. Thiolesterase that catalyzes the hydrolysis of S-D-lactoyl-glutathione to form glutathione and D-lactic acid. The polypeptide is Hydroxyacylglutathione hydrolase (Prochlorococcus marinus (strain NATL1A)).